Consider the following 45-residue polypeptide: Large ribosomal subunit protein bL34 (45 aa).

The segment covering 1–10 (MTKRTLEGTN) has biased composition (basic and acidic residues). The tract at residues 1 to 27 (MTKRTLEGTNRKRKRTSGFRARMRSAT) is disordered. A compositionally biased stretch (basic residues) spans 11 to 23 (RKRKRTSGFRARM).

Belongs to the bacterial ribosomal protein bL34 family.

The polypeptide is Large ribosomal subunit protein bL34 (Synechococcus elongatus (strain ATCC 33912 / PCC 7942 / FACHB-805) (Anacystis nidulans R2)).